The chain runs to 361 residues: MVDSMEFFDREKEINYLVKVLSFEPNLIYFIYGPINSGKTTLIKHIIENKLDRDKYVVFYINLREHFISKYEDFIEVLFNTYEETFIEKLKKYLLSFINDLPKNIDVKSTILTGIPVPKNTLNEFLSTKNSENVFEYLTKIFEDIKKKGKQPILIIDELQKIGDLKINGFLIYELFNFFIDLTKEKHLCHVLCLSSDSLFIERVYNEGTLKDRCKYYLVDDFDYKTTKAFLKKHNFNDEEIDIVWHYFGGKPIKLVEAIQEKLLGEDVKEFCKKSLRVRKRQLKDLLYSLEDDNKELFERVIKLFENFKNRDEIFYEKISEEIVWTVKKNILFVNIEEGILKPQSKLDLLAIREILDEIKT.

ATP is bound at residue 33-40 (GPINSGKT).

Belongs to the archaeal ATPase family.

This is an uncharacterized protein from Methanocaldococcus jannaschii (strain ATCC 43067 / DSM 2661 / JAL-1 / JCM 10045 / NBRC 100440) (Methanococcus jannaschii).